The sequence spans 299 residues: Recombination-associated protein RdgC (299 aa).

This sequence belongs to the RdgC family.

Its subcellular location is the cytoplasm. The protein localises to the nucleoid. Functionally, may be involved in recombination. This is Recombination-associated protein RdgC from Cupriavidus necator (strain ATCC 17699 / DSM 428 / KCTC 22496 / NCIMB 10442 / H16 / Stanier 337) (Ralstonia eutropha).